Reading from the N-terminus, the 126-residue chain is uncharacterized protein (126 aa).

A helical membrane pass occupies residues 55-77; sequence MLLINSNLVLSGLLLFIDVYRAA.

The protein resides in the membrane. This is an uncharacterized protein from Dictyostelium discoideum (Social amoeba).